The primary structure comprises 235 residues: Glucosamine-6-phosphate deaminase (235 aa).

The Proton acceptor; for enolization step role is filled by D62. N128 acts as the For ring-opening step in catalysis. H130 serves as the catalytic Proton acceptor; for ring-opening step. The active-site For ring-opening step is the E135.

Belongs to the glucosamine/galactosamine-6-phosphate isomerase family. NagB subfamily.

It catalyses the reaction alpha-D-glucosamine 6-phosphate + H2O = beta-D-fructose 6-phosphate + NH4(+). It participates in amino-sugar metabolism; N-acetylneuraminate degradation; D-fructose 6-phosphate from N-acetylneuraminate: step 5/5. Its function is as follows. Catalyzes the reversible isomerization-deamination of glucosamine 6-phosphate (GlcN6P) to form fructose 6-phosphate (Fru6P) and ammonium ion. The chain is Glucosamine-6-phosphate deaminase from Latilactobacillus sakei subsp. sakei (strain 23K) (Lactobacillus sakei subsp. sakei).